Reading from the N-terminus, the 328-residue chain is Probable D,D-dipeptide transport ATP-binding protein DdpD (328 aa).

The 252-residue stretch at 6–257 (LDIQQLHLSF…PRHPYTIGLL (252 aa)) folds into the ABC transporter domain. ATP is bound at residue 42 to 49 (GESGSGKS).

The protein belongs to the ABC transporter superfamily. The complex is composed of two ATP-binding proteins (DdpD and DdpF), two transmembrane proteins (DdpB and DdpC) and a solute-binding protein (DdpA).

The protein localises to the cell inner membrane. In terms of biological role, part of the ABC transporter complex DdpABCDF, which is probably involved in D,D-dipeptide transport. Probably responsible for energy coupling to the transport system. This chain is Probable D,D-dipeptide transport ATP-binding protein DdpD, found in Escherichia coli (strain K12).